The chain runs to 331 residues: Centriolar satellite-associated tubulin polyglutamylase complex regulator 1 (331 aa).

The interval 1–111 is required for interaction with PCM1; sequence MLSPERLALP…HCLLQLLCPD (111 aa). A required for interaction with TPGS1, LRRC49, and TTLL1 region spans residues 1-225; it reads MLSPERLALP…SCPPPALVKE (225 aa). Residues 112 to 331 form a required for interaction with TPGS2 region; the sequence is FPLELTQKAA…STEETDESET (220 aa). A disordered region spans residues 288 to 331; sequence SPEASCLPSRTPPRVGSPWRPLHHSRKVDGESDGSTEETDESET. Over residues 318–331 the composition is skewed to acidic residues; that stretch reads ESDGSTEETDESET. The residue at position 319 (S319) is a Phosphoserine.

The protein belongs to the CSTPP1 family. In terms of assembly, interacts with PCM1. Interacts with TTLL1, TPGS1, TPGS2 and LRRC49; the interactions link CSTPP1 to the complex TPGC. Binds to alpha-tubulin.

It localises to the cytoplasm. It is found in the cytoskeleton. Its subcellular location is the microtubule organizing center. The protein resides in the centrosome. The protein localises to the centriolar satellite. Its function is as follows. Regulator of the tubulin polyglutamylase complex (TPGC) that controls cytoskeletal organization, nuclear shape, and cilium disassembly by balancing microtubule and actin assembly. Regulates the assembly and stability of the TPGC and thereby modulates polyglutamylation of the microtubule, which antagonizes MAP4 binding. The sequence is that of Centriolar satellite-associated tubulin polyglutamylase complex regulator 1 from Homo sapiens (Human).